We begin with the raw amino-acid sequence, 312 residues long: MAIYLDFENHIKEIQNEIELALIRGDEDAKEILEKRLEKEVKSIYSNLTDFQKLQLARHPDRPYAMDYIDLILKDKYEVFGDRHYNDDKAIVCFIGKIDNVPVVVIGEEKGRGTKNKLLRNFGMPNPCGYRKALKMAKFAEKFNLPILMLVDTAGAYPGIGAEERGQSEAIAKNLQEFASLKVPTISVIIGEGGSGGALAIAVADKLAMMEYSIFSVISPEGCAAILWDDPSKTEVAIKAMKITPRDLKEAGLIDDIILEPSKGAHRDKFSAANTIKEYFLDALRTIQQDPHFLDNRYQKLMSLGSFVEGMN.

The 251-residue stretch at 36–286 (RLEKEVKSIY…KEYFLDALRT (251 aa)) folds into the CoA carboxyltransferase C-terminal domain.

The protein belongs to the AccA family. In terms of assembly, acetyl-CoA carboxylase is a heterohexamer composed of biotin carboxyl carrier protein (AccB), biotin carboxylase (AccC) and two subunits each of ACCase subunit alpha (AccA) and ACCase subunit beta (AccD).

The protein resides in the cytoplasm. It carries out the reaction N(6)-carboxybiotinyl-L-lysyl-[protein] + acetyl-CoA = N(6)-biotinyl-L-lysyl-[protein] + malonyl-CoA. It participates in lipid metabolism; malonyl-CoA biosynthesis; malonyl-CoA from acetyl-CoA: step 1/1. Functionally, component of the acetyl coenzyme A carboxylase (ACC) complex. First, biotin carboxylase catalyzes the carboxylation of biotin on its carrier protein (BCCP) and then the CO(2) group is transferred by the carboxyltransferase to acetyl-CoA to form malonyl-CoA. The protein is Acetyl-coenzyme A carboxylase carboxyl transferase subunit alpha of Helicobacter pylori (strain P12).